The following is a 234-amino-acid chain: Sugar fermentation stimulation protein homolog (234 aa).

It belongs to the SfsA family.

In Pseudoalteromonas atlantica (strain T6c / ATCC BAA-1087), this protein is Sugar fermentation stimulation protein homolog.